The sequence spans 356 residues: Nicotinate-nucleotide--dimethylbenzimidazole phosphoribosyltransferase (356 aa).

E317 functions as the Proton acceptor in the catalytic mechanism.

This sequence belongs to the CobT family. Homodimer.

The catalysed reaction is 5,6-dimethylbenzimidazole + nicotinate beta-D-ribonucleotide = alpha-ribazole 5'-phosphate + nicotinate + H(+). It participates in nucleoside biosynthesis; alpha-ribazole biosynthesis; alpha-ribazole from 5,6-dimethylbenzimidazole: step 1/2. Functionally, catalyzes the synthesis of alpha-ribazole-5'-phosphate from nicotinate mononucleotide (NAMN) and 5,6-dimethylbenzimidazole (DMB). This Salmonella typhi protein is Nicotinate-nucleotide--dimethylbenzimidazole phosphoribosyltransferase.